Here is a 350-residue protein sequence, read N- to C-terminus: Chorismate synthase (350 aa).

2 residues coordinate NADP(+): arginine 39 and arginine 45. The disordered stretch occupies residues 85–104 (KDKKVPPVTRPRPGHADLPG). Residues 119–121 (RAS), 213–214 (QG), glycine 258, 273–277 (KPIPT), and arginine 299 contribute to the FMN site.

Belongs to the chorismate synthase family. In terms of assembly, homotetramer. It depends on FMNH2 as a cofactor.

The enzyme catalyses 5-O-(1-carboxyvinyl)-3-phosphoshikimate = chorismate + phosphate. The protein operates within metabolic intermediate biosynthesis; chorismate biosynthesis; chorismate from D-erythrose 4-phosphate and phosphoenolpyruvate: step 7/7. In terms of biological role, catalyzes the anti-1,4-elimination of the C-3 phosphate and the C-6 proR hydrogen from 5-enolpyruvylshikimate-3-phosphate (EPSP) to yield chorismate, which is the branch point compound that serves as the starting substrate for the three terminal pathways of aromatic amino acid biosynthesis. This reaction introduces a second double bond into the aromatic ring system. The protein is Chorismate synthase of Caldanaerobacter subterraneus subsp. tengcongensis (strain DSM 15242 / JCM 11007 / NBRC 100824 / MB4) (Thermoanaerobacter tengcongensis).